We begin with the raw amino-acid sequence, 831 residues long: Periplasmic nitrate reductase (831 aa).

Residues 1-29 (MKVSRRDFIKQTAIAATASVAGIPLGTEA) constitute a signal peptide (tat-type signal). In terms of domain architecture, 4Fe-4S Mo/W bis-MGD-type spans 41-97 (LKWSKAPCRFCGTGCGVTVAVRDNKVVATQGDPQCEVNKGLNCVKGYFLSKIMYGQD). Residues C48, C51, C55, and C83 each contribute to the [4Fe-4S] cluster site. Mo-bis(molybdopterin guanine dinucleotide)-binding positions include K85, Q152, N177, C181, 214 to 221 (WGSNMAEM), 245 to 249 (STFTH), 264 to 266 (QTD), M375, Q379, N485, 511 to 512 (SD), K534, D561, and 721 to 730 (TGRVLEHWHS). W797 provides a ligand contact to substrate. Mo-bis(molybdopterin guanine dinucleotide)-binding residues include N805 and K822.

It belongs to the prokaryotic molybdopterin-containing oxidoreductase family. NasA/NapA/NarB subfamily. In terms of assembly, component of the periplasmic nitrate reductase NapAB complex composed of NapA and NapB. Requires [4Fe-4S] cluster as cofactor. Mo-bis(molybdopterin guanine dinucleotide) is required as a cofactor. Post-translationally, predicted to be exported by the Tat system. The position of the signal peptide cleavage has not been experimentally proven.

It localises to the periplasm. It carries out the reaction 2 Fe(II)-[cytochrome] + nitrate + 2 H(+) = 2 Fe(III)-[cytochrome] + nitrite + H2O. In terms of biological role, catalytic subunit of the periplasmic nitrate reductase complex NapAB. Receives electrons from NapB and catalyzes the reduction of nitrate to nitrite. The chain is Periplasmic nitrate reductase from Cupriavidus pinatubonensis (strain JMP 134 / LMG 1197) (Cupriavidus necator (strain JMP 134)).